The chain runs to 635 residues: Voltage-gated potassium channel KCNC4 (635 aa).

Residues 1-24 (MISSVCVSSYRGRKSGNKPPSKTC) are disordered. The interval 1-28 (MISSVCVSSYRGRKSGNKPPSKTCLKEE) is inactivation gate. The Cytoplasmic portion of the chain corresponds to 1 to 226 (MISSVCVSSY…EDPYSSRAAR (226 aa)). Phosphoserine occurs at positions 8, 9, 15, and 21. 4 residues coordinate Zn(2+): His-116, Cys-122, Cys-143, and Cys-144. The disordered stretch occupies residues 160 to 180 (IFESPDGGGSGAGPSDEAGDD). A helical transmembrane segment spans residues 227–247 (VVAFASLFFILVSITTFCLET). Residues Asn-256 and Asn-265 are each glycosylated (N-linked (GlcNAc...) asparagine). A helical transmembrane segment spans residues 278 to 298 (EPILTYIEGVCVLWFTLEFLV). Residues 299–312 (RIVCCPDTLDFVKN) lie on the Cytoplasmic side of the membrane. Residues 313–333 (LLNIIDFVAILPFYLEVGLSG) form a helical membrane-spanning segment. The helical; Voltage-sensor transmembrane segment at 345-364 (FLRVVRFVRILRIFKLTRHF) threads the bilayer. The Cytoplasmic portion of the chain corresponds to 365 to 380 (VGLRVLGHTLRASTNE). The helical transmembrane segment at 381–401 (FLLLIIFLALGVLIFATMIYY) threads the bilayer. The K(+) site is built by Thr-436, Leu-437, Gly-438, and Tyr-439. A Selectivity filter motif is present at residues 436 to 441 (TLGYGD). A helical transmembrane segment spans residues 452-472 (VGALCALAGVLTIAMPVPVIV). Residues 473–635 (NNFGMYYSLA…PTAGTLFLPH (163 aa)) lie on the Cytoplasmic side of the membrane. A disordered region spans residues 490–580 (KKRKKHVPRP…RRALRRSTTR (91 aa)). The span at 527–542 (AREEGMIERKRADSKQ) shows a compositional bias: basic and acidic residues.

Belongs to the potassium channel family. C (Shaw) (TC 1.A.1.2) subfamily. Kv3.4/KCNC4 sub-subfamily. As to quaternary structure, homotetramer. Heterotetramer of potassium channel proteins. In terms of processing, phosphorylation of serine residues in the inactivation gate inhibits rapid channel closure.

It is found in the membrane. The enzyme catalyses K(+)(in) = K(+)(out). Voltage-gated potassium channel that opens in response to the voltage difference across the membrane, forming a potassium-selective channel through which potassium ions pass in accordance with their electrochemical gradient. The channel displays rapid activation and inactivation kinetics. This is Voltage-gated potassium channel KCNC4 from Homo sapiens (Human).